The sequence spans 515 residues: MEEEDITLEHSDDLNKEESGESNRVNIEEPEHHDNSNKESTNLDDLNMLEEPKYHDNSNKESTNLDDLNMLEEPEHHDNSKKESTNLDDSNMLEEPKHHDNSNKESTNLDDLNMSEEPKHHDSSNKESTNLDNSNMDESENQKNFKIEEPKPSGDFRNEGPKQCDDSKIEKPELHVNSKIEEPIHRIDSEHNEPEYHTESKNEESEHNTKSIREEPIHHVDSKNEEPVYSKIPEKMGDEFSENSLSKSDSAVKQEGNLLIHPNNSLKDTAPSKCKEPPVDEALSKKEISDDIAQITSVTPITEKIEDKDKYISEVIDTYGKLADGFEYRAKTFCLEGRGKVLYMLGTECSRLLGFKDSYFMFHKTPSLRKVLTTQSERDQMVEMGLLASNFRFRQLSIVPARQMFLAFGARILMKGTIDPESHKALIEKNISWADDEYYHMDVMANGSTRSSSVKLELKSMDNQNSPSPFQGKDILTLAQGASFYNSKVMRTRNLRKEARLSYYTKLRGVNRSVS.

The tract at residues 1 to 226 (MEEEDITLEH…IHHVDSKNEE (226 aa)) is disordered. Composition is skewed to basic and acidic residues over residues 7–37 (TLEH…DNSN), 50–59 (EEPKYHDNSN), 73–85 (EPEH…KEST), 94–103 (EEPKHHDNSN), and 116–125 (EEPKHHDSSN). Polar residues predominate over residues 126-136 (KESTNLDNSNM). A compositionally biased stretch (basic and acidic residues) spans 140 to 226 (ENQKNFKIEE…IHHVDSKNEE (87 aa)).

The protein belongs to the RSC7/SWP82 family. SWP82 subfamily. In terms of assembly, component of the SWI/SNF global transcription activator complex composed of at least arp9, arp42, snf5, snf22, snf30, snf59, sol1, ssr1, ssr2, ssr3, ssr4 and tfg3.

The protein resides in the nucleus. Component of the SWI/SNF complex, an ATP-dependent chromatin remodeling complex, which is required for the positive and negative regulation of gene expression of a large number of genes. It changes chromatin structure by altering DNA-histone contacts within a nucleosome, leading eventually to a change in nucleosome position, thus facilitating or repressing binding of gene-specific transcription factors. The sequence is that of SWI/SNF global transcription activator complex subunit snf59 (snf59) from Schizosaccharomyces pombe (strain 972 / ATCC 24843) (Fission yeast).